The sequence spans 203 residues: Dual-action ribosomal maturation protein DarP (203 aa).

2 disordered regions span residues 1-31 (MTRKTRIQTIESAEPEVDENGYDRPSKSQLK) and 178-203 (NADGPPAQTDSEADDAQDDEDDDRDA). Positions 21–31 (GYDRPSKSQLK) are enriched in basic and acidic residues. Residues 188 to 203 (SEADDAQDDEDDDRDA) show a composition bias toward acidic residues.

This sequence belongs to the DarP family.

It localises to the cytoplasm. In terms of biological role, member of a network of 50S ribosomal subunit biogenesis factors which assembles along the 30S-50S interface, preventing incorrect 23S rRNA structures from forming. Promotes peptidyl transferase center (PTC) maturation. This Paraburkholderia xenovorans (strain LB400) protein is Dual-action ribosomal maturation protein DarP.